The following is a 339-amino-acid chain: Nucleoid-associated protein Asuc_0779 (339 aa).

It belongs to the YejK family.

Its subcellular location is the cytoplasm. The protein resides in the nucleoid. This is Nucleoid-associated protein Asuc_0779 from Actinobacillus succinogenes (strain ATCC 55618 / DSM 22257 / CCUG 43843 / 130Z).